Here is a 101-residue protein sequence, read N- to C-terminus: UPF0235 protein CJA_0091 (101 aa).

This sequence belongs to the UPF0235 family.

The chain is UPF0235 protein CJA_0091 from Cellvibrio japonicus (strain Ueda107) (Pseudomonas fluorescens subsp. cellulosa).